A 567-amino-acid polypeptide reads, in one-letter code: Urease subunit alpha (567 aa).

A Urease domain is found at 129–567; it reads GGVDTHIHFI…LPMAQRYFLF (439 aa). Ni(2+) contacts are provided by histidine 134, histidine 136, and lysine 217. An N6-carboxylysine modification is found at lysine 217. Substrate is bound at residue histidine 219. Ni(2+)-binding residues include histidine 246 and histidine 272. Histidine 320 acts as the Proton donor in catalysis. Position 360 (aspartate 360) interacts with Ni(2+).

The protein belongs to the metallo-dependent hydrolases superfamily. Urease alpha subunit family. In terms of assembly, heterotrimer of UreA (gamma), UreB (beta) and UreC (alpha) subunits. Three heterotrimers associate to form the active enzyme. Ni cation is required as a cofactor. Carboxylation allows a single lysine to coordinate two nickel ions.

It localises to the cytoplasm. The enzyme catalyses urea + 2 H2O + H(+) = hydrogencarbonate + 2 NH4(+). Its pathway is nitrogen metabolism; urea degradation; CO(2) and NH(3) from urea (urease route): step 1/1. This is Urease subunit alpha from Aliivibrio fischeri (strain MJ11) (Vibrio fischeri).